We begin with the raw amino-acid sequence, 719 residues long: Phosphoribosylformylglycinamidine synthase subunit PurL (719 aa).

His-47 is a catalytic residue. ATP contacts are provided by Tyr-50 and Lys-89. Position 91 (Glu-91) interacts with Mg(2+). Residues 92–95 and Arg-114 contribute to the substrate site; that span reads SHNH. Residue His-93 is the Proton acceptor of the active site. Asp-115 serves as a coordination point for Mg(2+). Gln-238 provides a ligand contact to substrate. Residue Asp-266 coordinates Mg(2+). Residue 310–312 coordinates substrate; the sequence is ESQ. The ATP site is built by Asp-488 and Gly-525. Asn-526 is a binding site for Mg(2+). Ser-528 serves as a coordination point for substrate.

The protein belongs to the FGAMS family. As to quaternary structure, monomer. Part of the FGAM synthase complex composed of 1 PurL, 1 PurQ and 2 PurS subunits.

The protein localises to the cytoplasm. The enzyme catalyses N(2)-formyl-N(1)-(5-phospho-beta-D-ribosyl)glycinamide + L-glutamine + ATP + H2O = 2-formamido-N(1)-(5-O-phospho-beta-D-ribosyl)acetamidine + L-glutamate + ADP + phosphate + H(+). It functions in the pathway purine metabolism; IMP biosynthesis via de novo pathway; 5-amino-1-(5-phospho-D-ribosyl)imidazole from N(2)-formyl-N(1)-(5-phospho-D-ribosyl)glycinamide: step 1/2. Part of the phosphoribosylformylglycinamidine synthase complex involved in the purines biosynthetic pathway. Catalyzes the ATP-dependent conversion of formylglycinamide ribonucleotide (FGAR) and glutamine to yield formylglycinamidine ribonucleotide (FGAM) and glutamate. The FGAM synthase complex is composed of three subunits. PurQ produces an ammonia molecule by converting glutamine to glutamate. PurL transfers the ammonia molecule to FGAR to form FGAM in an ATP-dependent manner. PurS interacts with PurQ and PurL and is thought to assist in the transfer of the ammonia molecule from PurQ to PurL. This is Phosphoribosylformylglycinamidine synthase subunit PurL from Ruegeria pomeroyi (strain ATCC 700808 / DSM 15171 / DSS-3) (Silicibacter pomeroyi).